The following is a 524-amino-acid chain: Origin of replication complex subunit 5 (524 aa).

Residues 1 to 19 are compositionally biased toward low complexity; sequence MSQPVTPRRTTRSSASASP. Residues 1 to 56 form a disordered region; it reads MSQPVTPRRTTRSSASASPSPAPASPTSPPKSRPKPSPRRQLLAAAAAPPKEDGSS. A compositionally biased stretch (pro residues) spans 20–31; that stretch reads SPAPASPTSPPK. A compositionally biased stretch (low complexity) spans 39–49; sequence RRQLLAAAAAP. 90 to 97 contributes to the ATP binding site; it reads GGAATGKT.

Belongs to the ORC5 family. Component of the origin recognition complex (ORC) composed of at least ORC1, ORC2, ORC3, ORC4, ORC5 and ORC6. ORC is regulated in a cell-cycle and development dependent manner. It is sequentially assembled at the exit from anaphase of mitosis and disassembled as cells enter S phase.

It is found in the nucleus. Component of the origin recognition complex (ORC) that binds origins of replication. DNA-binding is ATP-dependent. The specific DNA sequences that define origins of replication have not been identified yet. ORC is required to assemble the pre-replication complex necessary to initiate DNA replication. This is Origin of replication complex subunit 5 from Oryza sativa subsp. indica (Rice).